The sequence spans 251 residues: Phosphoribosylaminoimidazole-succinocarboxamide synthase (251 aa).

The protein belongs to the SAICAR synthetase family.

The catalysed reaction is 5-amino-1-(5-phospho-D-ribosyl)imidazole-4-carboxylate + L-aspartate + ATP = (2S)-2-[5-amino-1-(5-phospho-beta-D-ribosyl)imidazole-4-carboxamido]succinate + ADP + phosphate + 2 H(+). It functions in the pathway purine metabolism; IMP biosynthesis via de novo pathway; 5-amino-1-(5-phospho-D-ribosyl)imidazole-4-carboxamide from 5-amino-1-(5-phospho-D-ribosyl)imidazole-4-carboxylate: step 1/2. The chain is Phosphoribosylaminoimidazole-succinocarboxamide synthase from Ruegeria pomeroyi (strain ATCC 700808 / DSM 15171 / DSS-3) (Silicibacter pomeroyi).